A 233-amino-acid chain; its full sequence is Protein TIPIN homolog (233 aa).

The span at 1 to 14 (MDEMEDFFENDELD) shows a compositional bias: acidic residues. Disordered regions lie at residues 1–39 (MDEMEDFFENDELDREPSPMGDEAIEDNSGEGGTRRVVE) and 134–233 (GETG…NNDW). Basic and acidic residues-rich tracts occupy residues 163-190 (DLFKDLPEKEVTTEKAKNSEKSDQKTAE) and 197-216 (EEYRMMEEERLREEQEAKEA). A compositionally biased stretch (acidic residues) spans 217–227 (ADEDALMEDFG).

This sequence belongs to the CSM3 family.

It is found in the cytoplasm. The protein resides in the nucleus. Functionally, required for normal progression of S-phase. Important for cell survival after DNA damage or replication stress. The polypeptide is Protein TIPIN homolog (Caenorhabditis elegans).